A 64-amino-acid chain; its full sequence is Small cysteine-rich protein (64 aa).

An N-terminal signal peptide occupies residues 1–17 (FVCVQARQIDPEQILRT). A propeptide spanning residues 18 to 19 (PE) is cleaved from the precursor.

In terms of processing, contains 4 disulfide bonds.

It localises to the secreted. Its subcellular location is the nematocyst. In Anemonia viridis (Snakelocks anemone), this protein is Small cysteine-rich protein.